We begin with the raw amino-acid sequence, 237 residues long: Demethylmenaquinone methyltransferase (237 aa).

Residues threonine 58, aspartate 79, and 106–107 each bind S-adenosyl-L-methionine; that span reads NA.

It belongs to the class I-like SAM-binding methyltransferase superfamily. MenG/UbiE family.

The catalysed reaction is a 2-demethylmenaquinol + S-adenosyl-L-methionine = a menaquinol + S-adenosyl-L-homocysteine + H(+). The protein operates within quinol/quinone metabolism; menaquinone biosynthesis; menaquinol from 1,4-dihydroxy-2-naphthoate: step 2/2. Functionally, methyltransferase required for the conversion of demethylmenaquinol (DMKH2) to menaquinol (MKH2). This is Demethylmenaquinone methyltransferase from Bacillus cereus (strain B4264).